A 159-amino-acid chain; its full sequence is C-type lectin BJcuL (159 aa).

The N-terminal stretch at 1–24 is a signal peptide; sequence MGRFLFVASSACWFVFLSLSGAKG. 4 disulfides stabilise this stretch: C27–C38, C55–C155, C62–C157, and C130–C147. Residues 34 to 156 enclose the C-type lectin domain; that stretch reads MNGLCYKIFN…CESKNAFLCQ (123 aa). Positions 120, 122, 128, 143, and 144 each coordinate Ca(2+). A Galactose-binding motif is present at residues 120-122; it reads QPD.

It belongs to the true venom lectin family. As to quaternary structure, homodecamer of disulfide-linked dimers arranged in two 5-fold symmetric pentamers. Binds the gentamicin group of aminoglycoside antibiotics at the dimeric interface near the intermolecular disulfide bond. In terms of tissue distribution, expressed by the venom gland.

It is found in the secreted. With respect to regulation, hemagglutination activity is inhibited by lactose (MIC=2.5 mM), galactose (MIC=10 mM), and raffinose. Is very weakly or not inhibited by gentamicin, kanamycin, glucose and sucrose. Its function is as follows. Galactose-binding lectin which recognizes specific carbohydrate structures and agglutinates a variety of animal cells by binding to cell-surface glycoproteins and glycolipids. Calcium-dependent lectin. Also binds lactose and raffinose. Shows high hemagglutinating activity on mammalian erythrocytes. It also involved in immunological functions, since it is able of inducing potent neutrophil activation. In vivo, it causes edema and increases vascular permeability after injection into mouse hind paws (10-100 ug/paw). In anesthetized rats, it decreases the blood pressure by approximately 15%, with a rapid return to the resting level. Is an effective inhibitor of cell growth in some cancer cell lines, especially against renal and pancreatic cancer cell lines, human breast and ovarian carcinoma, glioblastoma and a bovine brain microvascular endothelial cell line. The chain is C-type lectin BJcuL from Bothrops jararacussu (Jararacussu).